The sequence spans 318 residues: Ribosomal protein L11 methyltransferase (318 aa).

Residues Thr159, Gly180, Asp202, and Asn253 each contribute to the S-adenosyl-L-methionine site.

The protein belongs to the methyltransferase superfamily. PrmA family.

It localises to the cytoplasm. The enzyme catalyses L-lysyl-[protein] + 3 S-adenosyl-L-methionine = N(6),N(6),N(6)-trimethyl-L-lysyl-[protein] + 3 S-adenosyl-L-homocysteine + 3 H(+). Methylates ribosomal protein L11. This Lachnospira eligens (strain ATCC 27750 / DSM 3376 / VPI C15-48 / C15-B4) (Eubacterium eligens) protein is Ribosomal protein L11 methyltransferase.